Consider the following 507-residue polypeptide: Histidine ammonia-lyase (507 aa).

The 5-imidazolinone (Ala-Gly) cross-link spans 141–143; the sequence is ASG. Serine 142 is modified (2,3-didehydroalanine (Ser)).

Belongs to the PAL/histidase family. Contains an active site 4-methylidene-imidazol-5-one (MIO), which is formed autocatalytically by cyclization and dehydration of residues Ala-Ser-Gly.

It localises to the cytoplasm. The catalysed reaction is L-histidine = trans-urocanate + NH4(+). It functions in the pathway amino-acid degradation; L-histidine degradation into L-glutamate; N-formimidoyl-L-glutamate from L-histidine: step 1/3. The protein is Histidine ammonia-lyase of Cereibacter sphaeroides (strain ATCC 17029 / ATH 2.4.9) (Rhodobacter sphaeroides).